Consider the following 427-residue polypeptide: Enolase (427 aa).

A (2R)-2-phosphoglycerate-binding site is contributed by Gln163. The active-site Proton donor is the Glu205. The Mg(2+) site is built by Asp242, Glu288, and Asp315. The (2R)-2-phosphoglycerate site is built by Lys340, Arg369, Ser370, and Lys391. Lys340 (proton acceptor) is an active-site residue.

Belongs to the enolase family. Requires Mg(2+) as cofactor.

It localises to the cytoplasm. It is found in the secreted. The protein localises to the cell surface. The catalysed reaction is (2R)-2-phosphoglycerate = phosphoenolpyruvate + H2O. It participates in carbohydrate degradation; glycolysis; pyruvate from D-glyceraldehyde 3-phosphate: step 4/5. Its function is as follows. Catalyzes the reversible conversion of 2-phosphoglycerate (2-PG) into phosphoenolpyruvate (PEP). It is essential for the degradation of carbohydrates via glycolysis. This is Enolase from Amoebophilus asiaticus (strain 5a2).